The sequence spans 593 residues: Tyrosine-protein phosphatase non-receptor type 11 (593 aa).

SH2 domains are found at residues 6–102 and 112–216; these read WFHP…KYPL and WFHG…KQPL. A Tyrosine-protein phosphatase domain is found at 247–521; it reads FWEEFETLQQ…RFIYMAVQHY (275 aa). Substrate is bound by residues Asp-425, 459–465, and Gln-506; that span reads CSAGIGR. Cys-459 functions as the Phosphocysteine intermediate in the catalytic mechanism. A compositionally biased stretch (polar residues) spans 548–557; that stretch reads SLSDQTSGDQ. Positions 548–575 are disordered; that stretch reads SLSDQTSGDQSPLPPCTPTPTCPEMRED. The segment covering 559-568 has biased composition (pro residues); it reads PLPPCTPTPT.

This sequence belongs to the protein-tyrosine phosphatase family. Non-receptor class 2 subfamily. In terms of processing, phosphorylated by tyrosine-protein kinases. Expressed in embryonic fibroblast, hematopoietic, erythroid, myeloid and lymphoid cells.

Its subcellular location is the cytoplasm. The catalysed reaction is O-phospho-L-tyrosyl-[protein] + H2O = L-tyrosyl-[protein] + phosphate. Functionally, this PTPase activity may directly link growth factor receptors and other signaling proteins through protein-tyrosine phosphorylation. The SH2 regions may interact with other cellular components to modulate its own phosphatase activity against interacting substrates. May play a positive role during the stages of erythroid cell proliferation. The sequence is that of Tyrosine-protein phosphatase non-receptor type 11 (PTPN11) from Gallus gallus (Chicken).